Reading from the N-terminus, the 327-residue chain is Arabinose 5-phosphate isomerase KpsF (327 aa).

One can recognise an SIS domain in the interval 48 to 191 (VLNLIMNCKG…AIAMIHQRKF (144 aa)). 63–68 (GMGKSG) is a binding site for ATP. Substrate-binding positions include 82–83 (GT), histidine 89, histidine 95, 121–130 (KLVPSLKNFG), and 155–157 (HMA). Histidine 89 is a Zn(2+) binding site. CBS domains lie at 217 to 273 (MQHD…EGSL) and 282 to 327 (MTRE…RIFD).

As to quaternary structure, homotetramer.

It carries out the reaction D-arabinose 5-phosphate = D-ribulose 5-phosphate. Its activity is regulated as follows. Inhibited by 10 uM zinc, cadmium or mercury ions. Its function is as follows. Involved in the biosynthesis of K-antigen capsules. Catalyzes the reversible aldol-ketol isomerization between D-ribulose 5-phosphate (Ru5P) and D-arabinose 5-phosphate (A5P). This is Arabinose 5-phosphate isomerase KpsF from Escherichia coli O6:H1 (strain CFT073 / ATCC 700928 / UPEC).